Reading from the N-terminus, the 138-residue chain is Basic phospholipase A2 Cvv-N6 (138 aa).

The N-terminal stretch at 1–16 is a signal peptide; sequence MRTFWIVALLLVGVEG. Intrachain disulfides connect Cys-42-Cys-131, Cys-44-Cys-60, Cys-59-Cys-111, Cys-65-Cys-138, Cys-66-Cys-104, Cys-73-Cys-97, and Cys-91-Cys-102. Positions 43, 45, and 47 each coordinate Ca(2+). The active site involves His-63. Asp-64 serves as a coordination point for Ca(2+). The active site involves Asp-105.

Belongs to the phospholipase A2 family. Group II subfamily. D49 sub-subfamily. In terms of assembly, monomer. Binds to calmodulin. It depends on Ca(2+) as a cofactor. Expressed by the venom gland.

The protein resides in the secreted. It carries out the reaction a 1,2-diacyl-sn-glycero-3-phosphocholine + H2O = a 1-acyl-sn-glycero-3-phosphocholine + a fatty acid + H(+). Heparin and wedelolactone inhibit the myotoxic activity. The PLA2 inhibitor, para-bromophenacyl bromide (BPB), inhibits enzymatic and myotoxic activities. In terms of biological role, snake venom phospholipase A2 (PLA2) that is myotoxic and displays moderate edema-inducing activity in rat paws. Does not show neurotoxic activity. PLA2 catalyzes the calcium-dependent hydrolysis of the 2-acyl groups in 3-sn-phosphoglycerides. The chain is Basic phospholipase A2 Cvv-N6 from Crotalus viridis viridis (Prairie rattlesnake).